An 854-amino-acid polypeptide reads, in one-letter code: SH2 domain-containing protein 3C (854 aa).

At Ser22 the chain carries Phosphoserine. Residues 34–43 show a composition bias toward low complexity; it reads RSSASASIRS. The disordered stretch occupies residues 34–129; the sequence is RSSASASIRS…AKEAGEGTEA (96 aa). Residues 99–124 show a composition bias toward basic and acidic residues; sequence EVSRESHLVSRRLPEPPDLEAAKEAG. Residues 215–314 form the SH2 domain; the sequence is WYHGRIPREV…QSGAIIYCPV (100 aa). Phosphotyrosine occurs at positions 273 and 278. 3 disordered regions span residues 330–384, 398–417, and 422–520; these read SQGS…PRDS, LHSPLSPISESPSSPAYSTV, and APSA…ERQK. Residues 333–347 are compositionally biased toward low complexity; it reads SSKTASPASPSGSKG. Position 354 is a phosphoserine (Ser354). Composition is skewed to low complexity over residues 400–415, 422–436, and 474–485; these read SPLSPISESPSSPAYS, APSATPSTSAQPASP, and SPSPSLSSYSDP. Ser435 is modified (phosphoserine). Residues 508-520 are compositionally biased toward basic and acidic residues; the sequence is TPRKARGSGERQK. One can recognise a Ras-GEF domain in the interval 580–848; the sequence is DARTLARHVT…TALSHKLEPA (269 aa). Tyr787 carries the phosphotyrosine modification.

As to quaternary structure, component of a complex comprised of SH2D3C, BCAR1/CAS, and CRK. Within the complex, interacts with CRK and (via C-terminus) with BCAR1/CAS (via C-terminus). Interacts with NEDD9/HEF1. Interacts with EPHB2. In terms of assembly, interacts with NEDD9/HEF1. Interacts with BCAR1/CAS. Interacts with PTK2B. Interacts (via C-terminus) with BCAR1/CAS (via C-terminus). Interacts with IGF1. Post-translationally, phosphorylated by MAPK/ERK upon T-cell receptor stimulation in T-cells. Expressed in the olfactory bulb and olfactory sensory neurons (at protein level). Expressed in B cells (at protein level). Expressed in T lymphocytes. As to expression, expressed in hematopoietic cells from spleen, lymph node and thymus (at protein level). Expressed weakly in the lung (at protein level). In terms of tissue distribution, expressed in the brain, lung, kidney, and weakly expressed in the liver and lung (at protein level).

The protein resides in the cytoplasm. It localises to the cell membrane. The protein localises to the cell projection. Its subcellular location is the axon. It is found in the ruffle membrane. In terms of biological role, acts as an adapter protein that mediates cell signaling pathways involved in cellular functions such as cell adhesion and migration, tissue organization, and the regulation of the immune response. Plays a role in integrin-mediated cell adhesion through BCAR1-CRK-RAPGEF1 signaling and activation of the small GTPase RAP1. Promotes cell migration and invasion through the extracellular matrix. Required for marginal zone B-cell development and thymus-independent type 2 immune responses. Mediates migration and adhesion of B cells in the splenic marginal zone via promoting hyperphosphorylation of NEDD9/CASL. Plays a role in CXCL13-induced chemotaxis of B-cells. Plays a role in the migration of olfactory sensory neurons (OSNs) into the forebrain and the innervation of the olfactory bulb by the OSN axons during development. Required for the efficient tyrosine phosphorylation of BCAR1 in OSN axons. Important regulator of chemokine-induced, integrin-mediated T lymphocyte adhesion and migration, acting upstream of RAP1. Required for tissue-specific adhesion of T lymphocytes to peripheral tissues. Required for basal and CXCL2 stimulated serine-threonine phosphorylation of NEDD9. May be involved in the regulation of T-cell receptor-mediated IL2 production through the activation of the JNK pathway in T-cells. Its function is as follows. May be involved in the BCAR1/CAS-mediated JNK activation pathway. In Mus musculus (Mouse), this protein is SH2 domain-containing protein 3C (Sh2d3c).